Here is a 369-residue protein sequence, read N- to C-terminus: Nuclear pore complex-interacting protein family member A2 (369 aa).

The segment at 325 to 346 is disordered; that stretch reads KTPPECLLTPLPPSAPPSADDN.

Belongs to the NPIP family.

The chain is Nuclear pore complex-interacting protein family member A2 (NPIPA2) from Homo sapiens (Human).